We begin with the raw amino-acid sequence, 290 residues long: UPF0761 membrane protein YihY (290 aa).

Transmembrane regions (helical) follow at residues 44–64 (LLSL…FPMF), 104–124 (VGAC…DSAL), 140–160 (FAVY…SLAI), 183–203 (IFPL…VPTI), 210–230 (AIVG…GFAL), and 244–264 (VLAV…IVLL).

It belongs to the UPF0761 family.

It localises to the cell inner membrane. The chain is UPF0761 membrane protein YihY from Escherichia coli O139:H28 (strain E24377A / ETEC).